The primary structure comprises 150 residues: Small ribosomal subunit protein eS19 (150 aa).

The protein belongs to the eukaryotic ribosomal protein eS19 family. As to quaternary structure, part of the 30S ribosomal subunit.

Functionally, may be involved in maturation of the 30S ribosomal subunit. This is Small ribosomal subunit protein eS19 (rps19e) from Pyrococcus abyssi (strain GE5 / Orsay).